The sequence spans 303 residues: Ribosomal protein L11 methyltransferase (303 aa).

S-adenosyl-L-methionine-binding residues include T152, G173, D195, and N239.

This sequence belongs to the methyltransferase superfamily. PrmA family.

The protein localises to the cytoplasm. The enzyme catalyses L-lysyl-[protein] + 3 S-adenosyl-L-methionine = N(6),N(6),N(6)-trimethyl-L-lysyl-[protein] + 3 S-adenosyl-L-homocysteine + 3 H(+). In terms of biological role, methylates ribosomal protein L11. The polypeptide is Ribosomal protein L11 methyltransferase (Desulforapulum autotrophicum (strain ATCC 43914 / DSM 3382 / VKM B-1955 / HRM2) (Desulfobacterium autotrophicum)).